We begin with the raw amino-acid sequence, 382 residues long: Lipid-A-disaccharide synthase (382 aa).

The protein belongs to the LpxB family.

It carries out the reaction 2-N,3-O-bis[(3R)-3-hydroxytetradecanoyl]-alpha-D-glucosaminyl 1-phosphate + UDP-2-N,3-O-bis[(3R)-3-hydroxytetradecanoyl]-alpha-D-glucosamine = lipid A disaccharide (E. coli) + UDP + H(+). It catalyses the reaction a lipid X + a UDP-2-N,3-O-bis[(3R)-3-hydroxyacyl]-alpha-D-glucosamine = a lipid A disaccharide + UDP + H(+). It participates in glycolipid biosynthesis; lipid IV(A) biosynthesis; lipid IV(A) from (3R)-3-hydroxytetradecanoyl-[acyl-carrier-protein] and UDP-N-acetyl-alpha-D-glucosamine: step 5/6. In terms of biological role, condensation of UDP-2,3-diacylglucosamine and 2,3-diacylglucosamine-1-phosphate to form lipid A disaccharide, a precursor of lipid A, a phosphorylated glycolipid that anchors the lipopolysaccharide to the outer membrane of the cell. This chain is Lipid-A-disaccharide synthase, found in Salmonella agona (strain SL483).